The primary structure comprises 257 residues: Neurotrophin-3 (257 aa).

The signal sequence occupies residues M1–G18. Residues N19–R138 constitute a propeptide that is removed on maturation. A disordered region spans residues S61–A81. Residues E67 to G76 show a composition bias toward basic and acidic residues. N131 carries an N-linked (GlcNAc...) asparagine glycan. Disulfide bonds link C152–C217, C195–C246, and C205–C248.

This sequence belongs to the NGF-beta family. As to expression, brain and peripheral tissues.

It localises to the secreted. Its function is as follows. Seems to promote the survival of visceral and proprioceptive sensory neurons. The protein is Neurotrophin-3 (NTF3) of Homo sapiens (Human).